Reading from the N-terminus, the 271-residue chain is NADPH-dependent 7-cyano-7-deazaguanine reductase (271 aa).

81 to 83 (IES) contributes to the substrate binding site. 83–84 (SK) is an NADPH binding site. Residue cysteine 177 is the Thioimide intermediate of the active site. The Proton donor role is filled by aspartate 184. 216–217 (HE) is a binding site for substrate. NADPH is bound at residue 245-246 (RG).

The protein belongs to the GTP cyclohydrolase I family. QueF type 2 subfamily. In terms of assembly, homodimer.

Its subcellular location is the cytoplasm. It catalyses the reaction 7-aminomethyl-7-carbaguanine + 2 NADP(+) = 7-cyano-7-deazaguanine + 2 NADPH + 3 H(+). The protein operates within tRNA modification; tRNA-queuosine biosynthesis. Its function is as follows. Catalyzes the NADPH-dependent reduction of 7-cyano-7-deazaguanine (preQ0) to 7-aminomethyl-7-deazaguanine (preQ1). This is NADPH-dependent 7-cyano-7-deazaguanine reductase from Xanthomonas campestris pv. campestris (strain B100).